Reading from the N-terminus, the 210-residue chain is MLTKEIQIAVEKGEMLPLMEEFYTIQGEGYHTGTAAYFIRIGGCDVGCHWCDVKESWNAALHPPTKTDVIVENATKYAKTIVVTGGEPLTWDMTVLTQRLKAENLQVHIETSGAYPVTGAWDWFCLSPKKNKLPVAEAYEIAHELKVIIYNKHDFIFAEEQAAKVNKNAILFLQSEWSKKEEMTPFIVDYVMNNPKWRVSLQTHKYLNIP.

Substrate contacts are provided by residues 25–27 (IQG) and R40. The region spanning 31–210 (HTGTAAYFIR…LQTHKYLNIP (180 aa)) is the Radical SAM core domain. Residues C44, C48, and C51 each coordinate [4Fe-4S] cluster. T84 contacts substrate. Residues G86 and 127–129 (SPK) each bind S-adenosyl-L-methionine. P210 is a substrate binding site.

It belongs to the radical SAM superfamily. 7-carboxy-7-deazaguanine synthase family. Homodimer. Requires [4Fe-4S] cluster as cofactor. It depends on S-adenosyl-L-methionine as a cofactor. Mg(2+) serves as cofactor.

The catalysed reaction is 6-carboxy-5,6,7,8-tetrahydropterin + H(+) = 7-carboxy-7-deazaguanine + NH4(+). The protein operates within purine metabolism; 7-cyano-7-deazaguanine biosynthesis. In terms of biological role, catalyzes the complex heterocyclic radical-mediated conversion of 6-carboxy-5,6,7,8-tetrahydropterin (CPH4) to 7-carboxy-7-deazaguanine (CDG), a step common to the biosynthetic pathways of all 7-deazapurine-containing compounds. This is 7-carboxy-7-deazaguanine synthase from Flavobacterium psychrophilum (strain ATCC 49511 / DSM 21280 / CIP 103535 / JIP02/86).